A 132-amino-acid chain; its full sequence is Guanyl-specific ribonuclease C2 (132 aa).

A signal peptide spans 1–26; that stretch reads MLYNKLITIAALLVPALAAPQGLDVR. Intrachain disulfides connect cysteine 28–cysteine 36 and cysteine 32–cysteine 129. Residue histidine 66 is part of the active site. Glutamate 84 acts as the Proton acceptor in catalysis. Histidine 118 acts as the Proton donor in catalysis.

It belongs to the ribonuclease N1/T1 family.

It is found in the secreted. The catalysed reaction is [RNA] containing guanosine + H2O = an [RNA fragment]-3'-guanosine-3'-phosphate + a 5'-hydroxy-ribonucleotide-3'-[RNA fragment].. This chain is Guanyl-specific ribonuclease C2, found in Aspergillus clavatus (strain ATCC 1007 / CBS 513.65 / DSM 816 / NCTC 3887 / NRRL 1 / QM 1276 / 107).